The following is a 446-amino-acid chain: Probable inactive lipase MT1628 (446 aa).

It belongs to the AB hydrolase superfamily. Lipase family.

This is Probable inactive lipase MT1628 from Mycobacterium tuberculosis (strain CDC 1551 / Oshkosh).